A 759-amino-acid polypeptide reads, in one-letter code: Forkhead box protein M1 (759 aa).

Residues 1–92 form a disordered region; it reads MRTSPRRPLI…MRLPSNPPQS (92 aa). Residues 48 to 63 show a composition bias toward basic and acidic residues; the sequence is LAHELEDMAPKSKADQ. Residues 260–358 constitute a DNA-binding region (fork-head); sequence RPPYSYMALI…KTASPMSPAD (99 aa). Disordered stretches follow at residues 420–450, 516–535, and 596–631; these read AESS…KHLG, SANP…PSNV, and KEHF…RDPV. Low complexity predominate over residues 601–612; the sequence is KPTTSSTPSKPT.

Localized to the animal hemisphere of early cleavage stage embryos. During neurulation, expressed in the neural folds. Later, expressed in the spinal cord and in the eye field. During tailbud stages, expression is still restricted to the neuroectoderm, predominantly to the hindbrain, the eye and the spinal cord. With ongoing development, expression is also found at lower levels in the branchial arches. At stage 35, expressed in the rhombencephalon and in the eye retina.

The protein localises to the nucleus. In terms of biological role, transcription factor regulating the expression of cell cycle genes essential for DNA replication and mitosis. Plays a role in the control of cell proliferation. Also plays a role in DNA break repair, participating in the DNA damage checkpoint response. Promotes transcription of PHB2. The chain is Forkhead box protein M1 from Xenopus laevis (African clawed frog).